The following is an 887-amino-acid chain: MLRSLLLLAPMVGAAVAATEPNSPACPGYRATNVREGHNSLTADLTLAGKPCNTYGTDLKNLKLLVEYQTDERLHVKIYDANEQVYQVPESVVPRVDGKGGSRKKSVLKFNFKANPFSFQVKRGREVLFDTSGSNLVFQDQYLNLRTSLPRDPNLYGLGEHTDPLRLTTTNYTRTLWNRDSYGIPENSNLYGSHPVYYDHRGEDGTHGVFLLNSNGMDIKIDKTKDGKQFLEYNALGGIFDFYFFNGDTPKDASIEYAKVAGLPAMQSYWSFGFHQCRYGYRDAFEVAEVVQNYTQAKIPLETMWTDIDYMDRRRVFTLDPDRFPLEKVRELVSYLHKHDQKYIVMVDPAVSVSDNKGFNDGMEQGVFMKHQNGSLYKGAVWPGVTAYPDWFHPDIQKYWDGQFNDFFSPEKGVDIDGLWIDMNEAANFCTYPCLDPEGYSIENNLPPAAPPVRPNPRPLPGFPDDFQPPAASKRSVAKGSKVGLPGRDLLNPRYQIRNDAGLISSKTINTDLIHAGEGYAEYDTHNLYGTMMSSASRQSMAQRRPAVRPLIITRSTFAGAGTHVGHWLGDNLADWKHYRISIAQMLSFASMFQVPMVGSDICGFGGDTNEELCARWARLGAFYPFFRNHNEITSIPQEFYRWESVAESARKAIEVRYKLLDYVYTAFHRQTQTGEPFLQPMFYMYPEDKNTFSNDMQFFYGDSILVSPVHDVSQTSVEAYFPKDIFYDWNTGDVLRGRGAKVTLSNISVTDIPIHIRGGSIVPIRSESAMTTVELRKKGFELLIAPGQDGTASGTLYLDDGDSLKQSASLELEFKYRKGNLQIKGKFGMHTDLKINAITLLGQTSVPRQVTLSRAGKADSKFDPARQSVTIKTDLSLNESSEIDIN.

The signal sequence occupies residues 1–17 (MLRSLLLLAPMVGAAVA). 3 N-linked (GlcNAc...) asparagine glycosylation sites follow: Asn-171, Asn-293, and Asn-373. Asp-422 serves as the catalytic Nucleophile. Glu-425 is a catalytic residue. A disordered region spans residues 457-483 (PRPLPGFPDDFQPPAASKRSVAKGSKV). Asp-571 (proton donor) is an active-site residue. Asn-747 and Asn-879 each carry an N-linked (GlcNAc...) asparagine glycan.

It belongs to the glycosyl hydrolase 31 family.

The protein localises to the secreted. It catalyses the reaction Hydrolysis of terminal, non-reducing (1-&gt;4)-linked alpha-D-glucose residues with release of alpha-D-glucose.. The enzyme catalyses Hydrolysis of terminal, non-reducing beta-D-glucosyl residues with release of beta-D-glucose.. Its function is as follows. Glucosidase involved in the degradation of cellulosic biomass. Has both alpha- and beta-glucosidase activity. The polypeptide is Probable alpha/beta-glucosidase agdC (agdC) (Aspergillus clavatus (strain ATCC 1007 / CBS 513.65 / DSM 816 / NCTC 3887 / NRRL 1 / QM 1276 / 107)).